Consider the following 359-residue polypeptide: Membrane-bound lytic murein transglycosylase C (359 aa).

Positions 1–16 (MKKVLALALIAPLLIS) are cleaved as a signal peptide. A lipid anchor (N-palmitoyl cysteine) is attached at cysteine 17. A lipid anchor (S-diacylglycerol cysteine) is attached at cysteine 17.

It belongs to the transglycosylase Slt family.

It is found in the cell outer membrane. It catalyses the reaction Exolytic cleavage of the (1-&gt;4)-beta-glycosidic linkage between N-acetylmuramic acid (MurNAc) and N-acetylglucosamine (GlcNAc) residues in peptidoglycan, from either the reducing or the non-reducing ends of the peptidoglycan chains, with concomitant formation of a 1,6-anhydrobond in the MurNAc residue.. Its function is as follows. Murein-degrading enzyme. May play a role in recycling of muropeptides during cell elongation and/or cell division. The protein is Membrane-bound lytic murein transglycosylase C of Edwardsiella ictaluri (strain 93-146).